We begin with the raw amino-acid sequence, 129 residues long: Probable protein cornichon homolog 2 (129 aa).

Helical transmembrane passes span 45–65 (FIVQ…FMTL) and 105–125 (LAYI…SALD).

The protein belongs to the cornichon family.

The protein localises to the membrane. The sequence is that of Probable protein cornichon homolog 2 from Arabidopsis thaliana (Mouse-ear cress).